The primary structure comprises 525 residues: MATLLRSLALFKRNKDKPPITSGSGGAIRGIKHIIIVPIPGDSSITTRSRLLDRLVRLIGNPDVSGPKLTGALIGILSLFVESPGQLIQRITDDPDVSIRLLEVVQSDQSQSGLTFASRGTNMEDEADQYFSHDDPISSDQSRFGWFGNKEISDIEVQDPEGFNMILGTILAQIWVLLAKAVTAPDTAADSELRRWIKYTQQRRVVGEFRLERKWLDVVRNRIAEDLSLRRFMVALILDIKRTPGNKPRIAEMICDIDTYIVEAGLASFILTIKFGIETMYPALGLHEFAGELSTLESLMNLYQQMGETAPYMVILENSIQNKFSAGSYPLLWSYAMGVGVELENSMGGLNFGRSYFDPAYFRLGQEMVRRSAGKVSSTLASELGITAEDARLVSEIAMHTTEDKISRAVGPRQAQVSFLHGDQSENELPRLGGKEDRRVKQSRGEARESYRETGPSRASDARAAHLPTGTPLDIDTATESSQDPQDSRRSADALLRLQAMAGISEEQGSDTDTPIVYNDRNLLD.

Positions 1–36 are homomultimerization; sequence MATLLRSLALFKRNKDKPPITSGSGGAIRGIKHIII. The RNA packaging and organization of the helical nucleocapsid stretch occupies residues 1 to 375; that stretch reads MATLLRSLAL…QEMVRRSAGK (375 aa). Residues 1 to 403 form a ncore region; it reads MATLLRSLAL…VSEIAMHTTE (403 aa). A Nuclear localization signal motif is present at residues 70–77; that stretch reads TGALIGIL. The RNA site is built by K180, R195, Q202, and Y260. The residue at position 279 (T279) is a Phosphothreonine; by host. Position 351 (N351) interacts with RNA. Residues 373–391 form a homomultimerization region; sequence AGKVSSTLASELGITAEDA. The segment at 404–525 is ntail; sequence DKISRAVGPR…IVYNDRNLLD (122 aa). The tract at residues 418-525 is disordered; sequence SFLHGDQSEN…IVYNDRNLLD (108 aa). The Nuclear export signal signature appears at 425–440; that stretch reads SENELPRLGGKEDRRV. A compositionally biased stretch (basic and acidic residues) spans 433–452; that stretch reads GGKEDRRVKQSRGEARESYR. An interaction with the phosphoprotein region spans residues 477–505; it reads TATESSQDPQDSRRSADALLRLQAMAGIS.

This sequence belongs to the paramyxoviruses nucleocapsid family. Homomultimer; forms the nucleocapsid. Binds to viral genomic RNA. N0 interacts (via Ncore) with the phosphoprotein (via N-terminus); this interaction allows P to chaperon N0 to avoid N polymerization and non-specific RNA binding before encapsidation. Interacts (via the Ntail) as N-RNA template with the phosphoprotein (via C-terminus XD); this interaction maintains the P/L complex anchored to the nucleocapsid template during the sequential transcription. Interacts with the phosphoprotein; this interaction leads to the formation of membraneless organelles that function as viral replication factories. Interacts with human FCGR2B protein. Interacts with human PPIA/CYPA and PPIB/CYPB. Phosphorylation at Thr-279 is required for the formation of the nucleocapsid.

The protein resides in the virion. It is found in the host cytoplasm. The protein localises to the host nucleus. Functionally, forms the helical nucleocapsid (NC) in a ratio of 1 N per 6 ribonucleotides, protecting the genome from nucleases. The nucleocapsid (NC) has a helical structure with either 12.35 or 11.64 N per turn, approximately 20 nm in diameter, with a hollow central cavity approximately 5 nm in diameter. The encapsidated genomic RNA serves as template for transcription and replication; encapsidation by N is coupled to RNA synthesis. Forms the encapsidation complex with the phosphoprotein protein P. Before encapsidation, the newly synthesized free N protein, so-called N0, is chaperoned by P. Participates, together with P, in the formation of viral factories (viroplasms), which are large inclusions in the host cytoplasm where replication takes place. N is released in the blood following lysis of measles infected cells, it interacts then with human FCGR2B on immune cells, inducing apoptosis and blocking inflammatory immune response. The protein is Nucleoprotein (N) of Measles virus (strain Edmonston-Moraten vaccine) (MeV).